A 264-amino-acid chain; its full sequence is Thymidylate synthase (264 aa).

Residue arginine 21 coordinates dUMP. Histidine 51 lines the (6R)-5,10-methylene-5,6,7,8-tetrahydrofolate pocket. 126 to 127 (RR) contacts dUMP. Cysteine 146 functions as the Nucleophile in the catalytic mechanism. DUMP-binding positions include 166 to 169 (RSCD), asparagine 177, and 207 to 209 (HLY). Residue aspartate 169 participates in (6R)-5,10-methylene-5,6,7,8-tetrahydrofolate binding. Alanine 263 contacts (6R)-5,10-methylene-5,6,7,8-tetrahydrofolate.

This sequence belongs to the thymidylate synthase family. Bacterial-type ThyA subfamily. Homodimer.

Its subcellular location is the cytoplasm. The catalysed reaction is dUMP + (6R)-5,10-methylene-5,6,7,8-tetrahydrofolate = 7,8-dihydrofolate + dTMP. It functions in the pathway pyrimidine metabolism; dTTP biosynthesis. Functionally, catalyzes the reductive methylation of 2'-deoxyuridine-5'-monophosphate (dUMP) to 2'-deoxythymidine-5'-monophosphate (dTMP) while utilizing 5,10-methylenetetrahydrofolate (mTHF) as the methyl donor and reductant in the reaction, yielding dihydrofolate (DHF) as a by-product. This enzymatic reaction provides an intracellular de novo source of dTMP, an essential precursor for DNA biosynthesis. This is Thymidylate synthase from Shigella dysenteriae serotype 1 (strain Sd197).